Consider the following 242-residue polypeptide: N-alpha-acetyltransferase 60 (242 aa).

Topologically, residues 1 to 192 are cytoplasmic; it reads MTEVVPSSAL…GGHPPWTILD (192 aa). The N-acetyltransferase domain occupies 13-182; the sequence is VSLRLLCHDD…DGFTYVLYIN (170 aa). Y38 serves as a coordination point for substrate. N6-acetyllysine; by autocatalysis is present on K79. The active site involves Y97. L99 lines the substrate pocket. 101–103 provides a ligand contact to acetyl-CoA; sequence LGV. K105, K109, and K121 each carry N6-acetyllysine; by autocatalysis. Residue 109–114 participates in acetyl-CoA binding; sequence KHGIGS. H138 is a catalytic residue. Acetyl-CoA contacts are provided by residues N143 and 150–153; that span reads YENR. K156 is modified (N6-acetyllysine; by autocatalysis). Residues 162-173 are required for homodimerization; it reads PYYYSIRGVLKD. Residue Y165 participates in substrate binding. The helical intramembrane region spans 193 to 236; sequence YIQHLGSALASLSPCSIPHRVYRQAHSLLCSFLPWSGISSKSGI. Residues 237-242 lie on the Cytoplasmic side of the membrane; that stretch reads EYSRTM.

This sequence belongs to the acetyltransferase family. NAA60 subfamily. In terms of assembly, monomer and homodimer; monomer in presence of substrate and homodimer in its absence. In terms of processing, acetylated: autoacetylation is required for optimal acetyltransferase activity.

The protein localises to the golgi apparatus membrane. The catalysed reaction is N-terminal L-methionyl-[transmembrane protein] + acetyl-CoA = N-terminal N(alpha)-acetyl-L-methionyl-[transmembrane protein] + CoA + H(+). It catalyses the reaction L-lysyl-[protein] + acetyl-CoA = N(6)-acetyl-L-lysyl-[protein] + CoA + H(+). N-alpha-acetyltransferase that specifically mediates the acetylation of N-terminal residues of the transmembrane proteins, with a strong preference for N-termini facing the cytosol. Displays N-terminal acetyltransferase activity towards a range of N-terminal sequences including those starting with Met-Lys, Met-Val, Met-Ala and Met-Met. Required for normal chromosomal segregation during anaphase. May also show histone acetyltransferase activity; such results are however unclear in vivo and would require additional experimental evidences. The polypeptide is N-alpha-acetyltransferase 60 (Homo sapiens (Human)).